Consider the following 344-residue polypeptide: S-adenosylmethionine:tRNA ribosyltransferase-isomerase (344 aa).

Belongs to the QueA family. In terms of assembly, monomer.

The protein localises to the cytoplasm. It carries out the reaction 7-aminomethyl-7-carbaguanosine(34) in tRNA + S-adenosyl-L-methionine = epoxyqueuosine(34) in tRNA + adenine + L-methionine + 2 H(+). It participates in tRNA modification; tRNA-queuosine biosynthesis. Transfers and isomerizes the ribose moiety from AdoMet to the 7-aminomethyl group of 7-deazaguanine (preQ1-tRNA) to give epoxyqueuosine (oQ-tRNA). The polypeptide is S-adenosylmethionine:tRNA ribosyltransferase-isomerase (Pediococcus pentosaceus (strain ATCC 25745 / CCUG 21536 / LMG 10740 / 183-1w)).